Here is a 303-residue protein sequence, read N- to C-terminus: Coenzyme PQQ synthesis protein B (303 aa).

The protein belongs to the PqqB family.

It participates in cofactor biosynthesis; pyrroloquinoline quinone biosynthesis. May be involved in the transport of PQQ or its precursor to the periplasm. The polypeptide is Coenzyme PQQ synthesis protein B (Acinetobacter baumannii (strain ACICU)).